The following is a 758-amino-acid chain: Solute carrier family 26 member 6 (758 aa).

The Cytoplasmic portion of the chain corresponds to 1–117 (MGLPDGSDQG…PQGLAYALLA (117 aa)). A helical transmembrane segment spans residues 118–138 (GLPPMFGLYSSFYPVFIYFLF). At 139–187 (GTSRHISVGTFAVMSVMVGSVTESLTADKAFVQGLNATADDARVQVAYT) the chain is on the extracellular side. Asparagine 174 carries an N-linked (GlcNAc) asparagine glycan. A helical transmembrane segment spans residues 188 to 208 (LSFLVGLFQVGLGLVHFGFVV). The Cytoplasmic portion of the chain corresponds to 209-263 (TYLSEPLVRSYTTAASVQVLVSQLKYVFGIKLSSHSGPLSVIYTVLEVCAQLPET). Residues 264–284 (VPGTVVTAIVAGVALVLVKLL) traverse the membrane as a helical segment. The Extracellular portion of the chain corresponds to 285–292 (NEKLHRRL). The chain crosses the membrane as a helical span at residues 293 to 313 (PLPIPGELLTLIGATGISYGV). The Cytoplasmic segment spans residues 314–340 (KLNDRFKVDVVGNITTGLIPPVAPKTE). A helical transmembrane segment spans residues 341-361 (LFATLVGNAFAIAVVGFAIAI). At 362 to 380 (SLGKIFALRHGYRVDSNQE) the chain is on the extracellular side. The chain crosses the membrane as a helical span at residues 381-401 (LVALGLSNLIGGFFQCFPVSC). At 402-417 (SMSRSLVQESTGGNTQ) the chain is on the cytoplasmic side. A helical membrane pass occupies residues 418–438 (VAGAVSSLFILLIIVKLGELF). Topologically, residues 439–485 (RDLPKAVLAAVIIVNLKGMMKQFSDICSLWKANRVDLLIWLVTFVAT) are extracellular. The helical transmembrane segment at 486-506 (ILLNLDIGLAVSIVFSLLLVV) threads the bilayer. Over 507-758 (VRMQLPHYSV…PKSPVLATKL (252 aa)) the chain is Cytoplasmic. The STAS domain occupies 531 to 741 (EYSGAKEVPG…ASVHDAVTFA (211 aa)). A disordered region spans residues 585–608 (EMKLKRMKKAKKSQKQDASSKISS). Serine 751 bears the Phosphoserine mark.

In terms of assembly, interacts (via C-terminal domain) with PDZK1 (via C-terminal PDZ domain); the interaction induces chloride and oxalate exchange transport. Interacts with CFTR, SLC26A3 and NHERF1. Interacts with AHCYL1; the interaction increases SLC26A6 activity. Post-translationally, N-glycosylated. Glycosylation at Asn-174 positively regulates its chloride oxalate exchanger activity. Expressed in kidney (at protein level). Expressed in spermatogenic cells. Expressed in intestine, kidney, testis, brain, muscle, heart, and stomach. Expressed in the submandibular and sublingual salivary glands. In terms of tissue distribution, highly expressed in stomach, kidney, heart and small intestine, low in the lung, liver, testis, brain, skeletal muscle and colon. As to expression, expressed in the heart.

It is found in the cell membrane. The protein resides in the apical cell membrane. Its subcellular location is the cytoplasmic vesicle membrane. It localises to the microsome. It catalyses the reaction 2 hydrogencarbonate(in) + chloride(out) = 2 hydrogencarbonate(out) + chloride(in). The enzyme catalyses oxalate(in) + chloride(out) = oxalate(out) + chloride(in). The catalysed reaction is oxalate(in) + formate(out) = oxalate(out) + formate(in). It carries out the reaction oxalate(in) + sulfate(out) = oxalate(out) + sulfate(in). It catalyses the reaction formate(in) + chloride(out) = formate(out) + chloride(in). The enzyme catalyses sulfate(in) = sulfate(out). With respect to regulation, apical membrane chloride-bicarbonate exchange activity of the pancreatic duct is inhibited by 4,4'-diisothiocyanatostilbene-2,2'-disulfonic acid (DIDS). Oxalate secretion in the duodenum and chloride-formate exchange activity is inhibited by DIDS. Chloride-formate exchange activity and transcellular sulfate absorption is inhibited by 4,4'-diisothiocyanatostilbene-2,2'-disulfonic acid (DIDS). Its function is as follows. Apical membrane anion-exchanger with wide epithelial distribution that plays a role as a component of the pH buffering system for maintaining acid-base homeostasis. Acts as a versatile DIDS-sensitive inorganic and organic anion transporter that mediates the uptake of monovalent anions like chloride, bicarbonate, formate and hydroxyl ion and divalent anions like sulfate and oxalate. Functions in multiple exchange modes involving pairs of these anions, which include chloride-bicarbonate, chloride-oxalate, oxalate-formate, oxalate-sulfate and chloride-formate exchange. Apical membrane chloride-bicarbonate exchanger that mediates luminal chloride absorption and bicarbonate secretion by the small intestinal brush border membrane and contributes to intracellular pH regulation in the duodenal upper villous epithelium during proton-coupled peptide absorption, possibly by providing a bicarbonate import pathway. Its association with carbonic anhydrase CA2 forms a bicarbonate transport metabolon; hence maximizes the local concentration of bicarbonate at the transporter site. Also mediates intestinal chloride absorption and oxalate secretion, thereby preventing hyperoxaluria and calcium oxalate urolithiasis. Transepithelial oxalate secretion, chloride-formate, chloride-oxalate and chloride-bicarbonate transport activities in the duodenum are inhibited by PKC activation in a calcium-independent manner. The apical membrane chloride-bicarbonate exchanger also provides a major route for fluid and bicarbonate secretion into the proximal tubules of the kidney as well as into the proximal part of the interlobular pancreatic ductal tree, where it mediates electrogenic chloride-bicarbonate exchange with a chloride-bicarbonate stoichiometry of 1:2, and hence will dilute and alkalinize protein-rich acinar secretion. Also mediates the transcellular sulfate absorption and oxalate secretion across the apical membrane in the duodenum and the formate ion efflux at the apical brush border of cells in the proximal tubules of kidney. Plays a role in sperm capacitation by increasing intracellular pH. Mediates electrogenic chloride-bicarbonate exchange with a chloride-bicarbonate stoichiometry of 1:2. Also mediates exchange of chloride-formate and chloride-oxalate ions. Mediates transcellular sulfate absorption. The polypeptide is Solute carrier family 26 member 6 (Mus musculus (Mouse)).